The chain runs to 409 residues: F-box/kelch-repeat protein At1g48625 (409 aa).

In terms of domain architecture, F-box spans 2–49 (ATMISNLPRDLMEEILSRVPLKSMRAVRLTCKNWHTLSITISESLAKM). Kelch repeat units follow at residues 169 to 218 (FIDY…LKGN) and 221 to 266 (WCAR…ILSC).

The protein is F-box/kelch-repeat protein At1g48625 of Arabidopsis thaliana (Mouse-ear cress).